Reading from the N-terminus, the 75-residue chain is Beta-defensin 30 (75 aa).

The first 22 residues, 1–22, serve as a signal peptide directing secretion; that stretch reads MGSLQLILVLFVLLSDVPPVRS. 3 cysteine pairs are disulfide-bonded: cysteine 35–cysteine 62, cysteine 42–cysteine 56, and cysteine 46–cysteine 63.

Belongs to the beta-defensin family.

It localises to the secreted. Functionally, has antibacterial activity. The protein is Beta-defensin 30 (Defb30) of Rattus norvegicus (Rat).